A 326-amino-acid polypeptide reads, in one-letter code: NAD kinase (326 aa).

D93 functions as the Proton acceptor in the catalytic mechanism. NAD(+) is bound by residues D93–G94, R98, N171–E172, R182, D201, and T212–S217.

This sequence belongs to the NAD kinase family. It depends on a divalent metal cation as a cofactor.

The protein localises to the cytoplasm. The catalysed reaction is NAD(+) + ATP = ADP + NADP(+) + H(+). Involved in the regulation of the intracellular balance of NAD and NADP, and is a key enzyme in the biosynthesis of NADP. Catalyzes specifically the phosphorylation on 2'-hydroxyl of the adenosine moiety of NAD to yield NADP. This Thermobifida fusca (strain YX) protein is NAD kinase.